The primary structure comprises 87 residues: Small ribosomal subunit protein uS15c (87 aa).

This sequence belongs to the universal ribosomal protein uS15 family. As to quaternary structure, part of the 30S ribosomal subunit.

Its subcellular location is the plastid. It localises to the chloroplast. This is Small ribosomal subunit protein uS15c (rps15) from Oenothera biennis (German evening primrose).